A 390-amino-acid chain; its full sequence is LL-diaminopimelate aminotransferase 2 (390 aa).

2 residues coordinate substrate: Tyr-13 and Gly-38. Residues Tyr-67, Ser-102–Lys-103, Tyr-127, Asn-177, Tyr-208, and Ser-236–Ser-238 contribute to the pyridoxal 5'-phosphate site. Residues Lys-103, Tyr-127, and Asn-177 each contribute to the substrate site. Position 239 is an N6-(pyridoxal phosphate)lysine (Lys-239). Residue Arg-247 participates in pyridoxal 5'-phosphate binding. Arg-365 contacts substrate.

The protein belongs to the class-I pyridoxal-phosphate-dependent aminotransferase family. LL-diaminopimelate aminotransferase subfamily. As to quaternary structure, homodimer. Pyridoxal 5'-phosphate serves as cofactor.

The catalysed reaction is (2S,6S)-2,6-diaminopimelate + 2-oxoglutarate = (S)-2,3,4,5-tetrahydrodipicolinate + L-glutamate + H2O + H(+). Its pathway is amino-acid biosynthesis; L-lysine biosynthesis via DAP pathway; LL-2,6-diaminopimelate from (S)-tetrahydrodipicolinate (aminotransferase route): step 1/1. Involved in the synthesis of meso-diaminopimelate (m-DAP or DL-DAP), required for both lysine and peptidoglycan biosynthesis. Catalyzes the direct conversion of tetrahydrodipicolinate to LL-diaminopimelate. The polypeptide is LL-diaminopimelate aminotransferase 2 (Nostoc sp. (strain PCC 7120 / SAG 25.82 / UTEX 2576)).